The following is a 239-amino-acid chain: Protein LIFEGUARD 2 (239 aa).

Transmembrane regions (helical) follow at residues 41 to 61 (LLVT…SVFF), 66 to 86 (AGFA…CPLY), 96 to 116 (YLLL…TCAF), 121 to 141 (VILE…LYTF), 156 to 176 (FLFG…LFPL), 179 to 199 (ISVM…IVYD), and 213 to 233 (IWAA…LLTL).

Belongs to the BI1 family. Expressed in seedlings, roots, leaves, inflorescences and flowers.

The protein resides in the membrane. Functionally, regulates the brassinosteroid (BR) signaling pathway that mediates cell elongation and organ morphogenesis. (Microbial infection) Facilitates the development of the powdery mildew fungus E.cruciferarum. In terms of biological role, (Microbial infection) May prevent cell death upon A.alternata f.sp. lycopersici (AAL) toxin treatment. The sequence is that of Protein LIFEGUARD 2 from Arabidopsis thaliana (Mouse-ear cress).